The following is a 255-amino-acid chain: Ribonuclease HII (255 aa).

Residues 70 to 255 (EYIAGVDEVG…FEPVKKILLK (186 aa)) enclose the RNase H type-2 domain. The a divalent metal cation site is built by aspartate 76, glutamate 77, and aspartate 168.

This sequence belongs to the RNase HII family. Mn(2+) is required as a cofactor. Mg(2+) serves as cofactor.

Its subcellular location is the cytoplasm. It catalyses the reaction Endonucleolytic cleavage to 5'-phosphomonoester.. Endonuclease that specifically degrades the RNA of RNA-DNA hybrids. The polypeptide is Ribonuclease HII (Ligilactobacillus salivarius (strain UCC118) (Lactobacillus salivarius)).